A 168-amino-acid polypeptide reads, in one-letter code: Photosystem I assembly protein Ycf3 (168 aa).

TPR repeat units lie at residues A35 to P68, S72 to L105, and G120 to N153.

The protein belongs to the Ycf3 family.

Its subcellular location is the plastid. The protein resides in the chloroplast thylakoid membrane. In terms of biological role, essential for the assembly of the photosystem I (PSI) complex. May act as a chaperone-like factor to guide the assembly of the PSI subunits. This chain is Photosystem I assembly protein Ycf3, found in Helianthus annuus (Common sunflower).